Consider the following 405-residue polypeptide: Lipase lipl-1 (405 aa).

An N-terminal signal peptide occupies residues 1 to 20; sequence MRSWSTVMLAVLATAATVFG. Residue asparagine 66 is glycosylated (N-linked (GlcNAc...) asparagine). The active-site Nucleophile is the serine 169. An N-linked (GlcNAc...) asparagine glycan is attached at asparagine 273. Active-site charge relay system residues include aspartate 344 and histidine 376.

It belongs to the AB hydrolase superfamily. Lipase family.

Its subcellular location is the secreted. The protein resides in the lysosome lumen. Functionally, lipase that, together with lipl-3, plays a role in the response to nutrient deprivation by controlling lipid metabolism. Specifically, involved in the breakdown of lipids during lipophagy, a process during which lipids contained in lipid droplets that have been delivered to lysosomes by autophagy are degraded. The polypeptide is Lipase lipl-1 (Caenorhabditis elegans).